We begin with the raw amino-acid sequence, 62 residues long: Conotoxin Qc5.2 (62 aa).

An N-terminal signal peptide occupies residues 1-22; the sequence is MRCVPVFIILLLLSPSAPSVDA. The propeptide occupies 23–48; sequence HPMTKDDVPQASLHDDAKRTLQVPWM. A Valine amide modification is found at valine 60.

It belongs to the conotoxin T superfamily. Contains 2 disulfide bonds that can be either 'C1-C3, C2-C4' or 'C1-C4, C2-C3', since these disulfide connectivities have been observed for conotoxins with cysteine framework V (for examples, see AC P0DQQ7 and AC P81755). In terms of tissue distribution, expressed by the venom duct.

The protein localises to the secreted. This chain is Conotoxin Qc5.2, found in Conus quercinus (Oak cone).